The sequence spans 24 residues: Humanin-like 13 (24 aa).

It belongs to the humanin family.

The protein localises to the secreted. Its subcellular location is the cytoplasm. Plays a role as a neuroprotective and antiapoptotic factor. The protein is Humanin-like 13 of Homo sapiens (Human).